The primary structure comprises 600 residues: Zinc metalloproteinase-disintegrin-like stejnihagin-A (600 aa).

The signal sequence occupies residues 1–20 (MIEVLLVTICLAVFPYQGSS). Residues 21 to 191 (IILESGNVND…KASQLVVTAE (171 aa)) constitute a propeptide that is removed on maturation. A Pyrrolidone carboxylic acid modification is found at Gln192. In terms of domain architecture, Peptidase M12B spans 198 to 389 (RYVKLAIVAD…YNPQCILNAP (192 aa)). 3 disulfide bridges follow: Cys306/Cys384, Cys346/Cys368, and Cys348/Cys351. Asn317 is a glycosylation site (N-linked (GlcNAc...) asparagine). Residue His331 participates in Zn(2+) binding. Glu332 is an active-site residue. The Zn(2+) site is built by His335 and His341. Asn367 carries an N-linked (GlcNAc...) asparagine glycan. The region spanning 397–483 (PPVCGNELLE…DCPTDDFHRN (87 aa)) is the Disintegrin domain. Ca(2+)-binding residues include Val399, Asn402, Leu404, Glu406, Glu409, and Asp412. Cystine bridges form between Cys400/Cys429, Cys411/Cys424, Cys413/Cys419, Cys423/Cys446, Cys437/Cys443, Cys442/Cys468, Cys455/Cys475, Cys462/Cys494, Cys487/Cys499, Cys506/Cys556, Cys521/Cys565, Cys534/Cys544, Cys551/Cys587, and Cys581/Cys593. The short motif at 461-463 (ECD) is the D/ECD-tripeptide element. N-linked (GlcNAc...) asparagine glycosylation is present at Asn568.

It belongs to the venom metalloproteinase (M12B) family. P-III subfamily. P-IIIa sub-subfamily. Monomer. It depends on Zn(2+) as a cofactor. Expressed by the venom gland.

It localises to the secreted. In terms of biological role, this metalloproteinase-disintegrin-like impairs hemostasis in the envenomed animal. The polypeptide is Zinc metalloproteinase-disintegrin-like stejnihagin-A (Trimeresurus stejnegeri (Chinese green tree viper)).